A 77-amino-acid chain; its full sequence is Large ribosomal subunit protein eL20 (77 aa).

The protein belongs to the eukaryotic ribosomal protein eL20 family. As to quaternary structure, part of the 50S ribosomal subunit. Binds 23S rRNA.

This Thermococcus kodakarensis (strain ATCC BAA-918 / JCM 12380 / KOD1) (Pyrococcus kodakaraensis (strain KOD1)) protein is Large ribosomal subunit protein eL20.